We begin with the raw amino-acid sequence, 697 residues long: MAPWPELENAQPNPGKFIEGASGPQSSIPAKDKEASKTNDNGTPVAKTELLPSYSALVLIEEHPEGTDPWDLPELQDTGIKWSERDTKGKTLCIFQGVGKFILLLGFLYLFVCSLDVLSSAFQLVGGKVAGQFFSNNSIMSNPVAGLVIGVLVTVMVQSSSTSSSIIVSMVASSLLTVRAAIPIIMGANIGTSITNTIVALMQAGDRNEFRRAFAGATVHDFFNWLSVFVLLPLEAATHYLEILTNLVLETFKFQNGEDAPDILKVITDPFTKLIIQLDKKVIQQIAMGDSAAQNKSLIKIWCKSITNVTEMNVTVPSTDNCTSPSYCWTDGIQTWTIQNVTQKENIAKCQHIFVNFSLPDLAVGIILLTVSLVVLCGCLIMIVKLLGSVLRGQVATVIKKTLNTDFPFPFAWLTGYLAILVGAGMTFIVQSSSVFTSAMTPLIGIGVISIERAYPLTLGSNIGTTTTAILAALASPGNTLRSSLQIALCHFFFNISGILLWYPIPFTRLPIRLAKGLGNISAKYRWFAVFYLIFFFFVTPLTVFGLSLAGWPVLVGVGVPIILLLLLVLCLRMLQFRCPRILPLKLRDWNFLPLWMHSLKPWDNVISLATTCFQRRCCCCCRVCCRVCCMVCGCKCCRCSKCCRDQGEEEEEKEQDIPVKASGAFDNAAMSKECQDEGKGQVEVLSMKALSNTTVF.

The disordered stretch occupies residues 1 to 45 (MAPWPELENAQPNPGKFIEGASGPQSSIPAKDKEASKTNDNGTPV). Over 1–91 (MAPWPELENA…WSERDTKGKT (91 aa)) the chain is Cytoplasmic. A helical membrane pass occupies residues 92–112 (LCIFQGVGKFILLLGFLYLFV). Over 113-136 (CSLDVLSSAFQLVGGKVAGQFFSN) the chain is Extracellular. The helical transmembrane segment at 137-157 (NSIMSNPVAGLVIGVLVTVMV) threads the bilayer. Residues 158-213 (QSSSTSSSIIVSMVASSLLTVRAAIPIIMGANIGTSITNTIVALMQAGDRNEFRRA) lie on the Cytoplasmic side of the membrane. Residues 214 to 234 (FAGATVHDFFNWLSVFVLLPL) form a helical membrane-spanning segment. Residues 235–363 (EAATHYLEIL…FVNFSLPDLA (129 aa)) are Extracellular-facing. N295, N308, N321, and N356 each carry an N-linked (GlcNAc...) asparagine glycan. The cysteines at positions 303 and 350 are disulfide-linked. The helical transmembrane segment at 364 to 384 (VGIILLTVSLVVLCGCLIMIV) threads the bilayer. At 385–408 (KLLGSVLRGQVATVIKKTLNTDFP) the chain is on the cytoplasmic side. The chain crosses the membrane as a helical span at residues 409–429 (FPFAWLTGYLAILVGAGMTFI). Residues 430-486 (VQSSSVFTSAMTPLIGIGVISIERAYPLTLGSNIGTTTTAILAALASPGNTLRSSLQ) are Extracellular-facing. The chain crosses the membrane as a helical span at residues 487–507 (IALCHFFFNISGILLWYPIPF). Over 508–526 (TRLPIRLAKGLGNISAKYR) the chain is Cytoplasmic. Residues 527 to 547 (WFAVFYLIFFFFVTPLTVFGL) traverse the membrane as a helical segment. At 548–551 (SLAG) the chain is on the extracellular side. A helical membrane pass occupies residues 552–572 (WPVLVGVGVPIILLLLLVLCL). The Cytoplasmic segment spans residues 573–696 (RMLQFRCPRI…SMKALSNTTV (124 aa)).

This sequence belongs to the SLC34A transporter family. Highly abundant in the ileum of small intestine, whereas it is almost absent in the duodenum and in the jejunum.

The protein resides in the apical cell membrane. It catalyses the reaction 3 Na(+)(out) + phosphate(out) = 3 Na(+)(in) + phosphate(in). Involved in actively transporting phosphate into cells via Na(+) cotransport. The protein is Sodium-dependent phosphate transport protein 2B (Slc34a2) of Mus musculus (Mouse).